We begin with the raw amino-acid sequence, 870 residues long: Elastin (870 aa).

Residues 1 to 27 (MAGLTAAVPQPGVLLILLLNLLHPAQP) form the signal peptide. Residues Pro-39 and Pro-75 each carry the 4-hydroxyproline modification. At Pro-87 the chain carries Hydroxyproline. Pro-105 carries the post-translational modification 4-hydroxyproline. An allysine mark is found at Lys-122 and Lys-126. Residues Pro-207, Pro-220, Pro-223, and Pro-244 each carry the 4-hydroxyproline modification. An allysine mark is found at Lys-290 and Lys-309. Position 338 is a 4-hydroxyproline (Pro-338). 2 positions are modified to allysine: Lys-360 and Lys-363. Hydroxyproline is present on Pro-375. A 4-hydroxyproline mark is found at Pro-402 and Pro-408. A hydroxyproline mark is found at Pro-413 and Pro-418. Allysine occurs at positions 434, 438, 441, 485, and 488. 4-hydroxyproline occurs at positions 518 and 539. 5 positions are modified to allysine: Lys-554, Lys-558, Lys-615, Lys-619, and Lys-623. Residues Pro-637, Pro-646, Pro-662, and Pro-670 each carry the 4-hydroxyproline modification. Lys-677 and Lys-680 each carry allysine. At Pro-715 the chain carries 4-hydroxyproline. An allysine mark is found at Lys-730, Lys-734, Lys-793, and Lys-796. 4-hydroxyproline is present on Pro-842. A disulfide bond links Cys-860 and Cys-865.

This sequence belongs to the elastin family. The polymeric elastin chains are cross-linked together into an extensible 3D network. Forms a ternary complex with BGN and MFAP2. Interacts with MFAP2 via divalent cations (calcium &gt; magnesium &gt; manganese) in a dose-dependent and saturating manner. Interacts with FBLN5 and FBN1. Forms a ternary complex with FBN1 and FBLN2 or FBLN5. Interacts with MFAP4 in a Ca (2+)-dependent manner; this interaction promotes ELN self-assembly. Interacts with EFEMP2 with moderate affinity. Post-translationally, elastin is formed through the cross-linking of its soluble precursor tropoelastin. Cross-linking is initiated through the action of lysyl oxidase on exposed lysines to form allysine. Subsequent spontaneous condensation reactions with other allysine or unmodified lysine residues result in various bi-, tri-, and tetrafunctional cross-links. The most abundant cross-links in mature elastin fibers are lysinonorleucine, allysine aldol, desmosine, and isodesmosine. In terms of processing, hydroxylation on proline residues within the sequence motif, GXPG, is most likely to be 4-hydroxy as this fits the requirement for 4-hydroxylation in vertebrates.

Its subcellular location is the secreted. The protein localises to the extracellular space. It localises to the extracellular matrix. Major structural protein of tissues such as aorta and nuchal ligament, which must expand rapidly and recover completely. Molecular determinant of the late arterial morphogenesis, stabilizing arterial structure by regulating proliferation and organization of vascular smooth muscle. This is Elastin (Eln) from Rattus norvegicus (Rat).